The primary structure comprises 219 residues: Probable GTP-binding protein EngB (219 aa).

One can recognise an EngB-type G domain in the interval 24–207 (VQPEIAFAGR…HELIESWLRP (184 aa)). GTP is bound by residues 32–39 (GRSNAGKS), 59–63 (GRTQH), 81–84 (DLPG), 148–151 (TKCD), and 186–188 (FSA). Residues Ser-39 and Thr-61 each coordinate Mg(2+).

This sequence belongs to the TRAFAC class TrmE-Era-EngA-EngB-Septin-like GTPase superfamily. EngB GTPase family. It depends on Mg(2+) as a cofactor.

Its function is as follows. Necessary for normal cell division and for the maintenance of normal septation. The sequence is that of Probable GTP-binding protein EngB from Burkholderia ambifaria (strain ATCC BAA-244 / DSM 16087 / CCUG 44356 / LMG 19182 / AMMD) (Burkholderia cepacia (strain AMMD)).